The chain runs to 58 residues: uncharacterized protein (58 aa).

The protein resides in the plastid. It localises to the chloroplast. This is an uncharacterized protein from Chlamydomonas reinhardtii (Chlamydomonas smithii).